Reading from the N-terminus, the 153-residue chain is Transcriptional repressor NrdR (153 aa).

Residues Cys3–Cys34 fold into a zinc finger. The ATP-cone domain maps to Leu49–Val139.

Belongs to the NrdR family. Zn(2+) serves as cofactor.

In terms of biological role, negatively regulates transcription of bacterial ribonucleotide reductase nrd genes and operons by binding to NrdR-boxes. This chain is Transcriptional repressor NrdR, found in Geobacillus sp. (strain WCH70).